We begin with the raw amino-acid sequence, 183 residues long: uncharacterized protein (183 aa).

This is an uncharacterized protein from Bacillus subtilis (strain 168).